The sequence spans 528 residues: Cytochrome P450 monooxygenase vrcB (528 aa).

Residues 5–27 form a helical membrane-spanning segment; that stretch reads YGLFFAAVALYSVALVIYRLYLH. Cys-470 contacts heme.

The protein belongs to the cytochrome P450 family. The cofactor is heme.

The protein resides in the membrane. The catalysed reaction is variecoladiene + 4 reduced [NADPH--hemoprotein reductase] + 4 O2 = variecolin + 4 oxidized [NADPH--hemoprotein reductase] + 6 H2O + 4 H(+). It participates in secondary metabolite biosynthesis; terpenoid biosynthesis. Functionally, cytochrome P450 monooxygenase; part of the gene cluster that mediates the biosynthesis of the sesterterpene variecolin. The first step in the pathway is performed by the variecoladiene synthase vrcA that possesses both prenyl transferase and terpene cyclase activity, converting isopentenyl diphosphate and dimethylallyl diphosphate into geranylfarnesyl pyrophosphate (GFPP) and then converting GFPP into the tetracyclic variecoladiene. The cytochrome P450 monooxygenase vrcB then catalyzes multiple oxidations at C-5 and C-20 positions to yield variecolin. The sequence is that of Cytochrome P450 monooxygenase vrcB from Aspergillus aculeatus (strain ATCC 16872 / CBS 172.66 / WB 5094).